A 142-amino-acid chain; its full sequence is Large ribosomal subunit protein uL11 (142 aa).

This sequence belongs to the universal ribosomal protein uL11 family. Part of the ribosomal stalk of the 50S ribosomal subunit. Interacts with L10 and the large rRNA to form the base of the stalk. L10 forms an elongated spine to which L12 dimers bind in a sequential fashion forming a multimeric L10(L12)X complex. Post-translationally, one or more lysine residues are methylated.

Its function is as follows. Forms part of the ribosomal stalk which helps the ribosome interact with GTP-bound translation factors. The polypeptide is Large ribosomal subunit protein uL11 (Dictyoglomus turgidum (strain DSM 6724 / Z-1310)).